We begin with the raw amino-acid sequence, 359 residues long: 3-isopropylmalate dehydrogenase (359 aa).

77–88 (GPKWGTGDVRPE) is an NAD(+) binding site. The substrate site is built by arginine 95, arginine 105, arginine 134, and aspartate 223. Positions 223, 248, and 252 each coordinate Mg(2+). Residue 287–298 (GSAPDLPAGKVN) participates in NAD(+) binding.

This sequence belongs to the isocitrate and isopropylmalate dehydrogenases family. As to quaternary structure, homodimer. Requires Mg(2+) as cofactor. The cofactor is Mn(2+).

Its subcellular location is the cytoplasm. It catalyses the reaction (2R,3S)-3-isopropylmalate + NAD(+) = 4-methyl-2-oxopentanoate + CO2 + NADH. The protein operates within amino-acid biosynthesis; L-leucine biosynthesis; L-leucine from 3-methyl-2-oxobutanoate: step 3/4. Its function is as follows. Catalyzes the oxidation of 3-carboxy-2-hydroxy-4-methylpentanoate (3-isopropylmalate) to 3-carboxy-4-methyl-2-oxopentanoate. The product decarboxylates to 4-methyl-2 oxopentanoate. The chain is 3-isopropylmalate dehydrogenase (LEU2) from Diutina rugosa (Yeast).